We begin with the raw amino-acid sequence, 419 residues long: Metacaspase-1B (419 aa).

The interval 1–109 is disordered; sequence MYHPNYNYPP…PPMEAQQFGK (109 aa). Pro residues predominate over residues 33–50; that stretch reads SPPPPQPYYSNGYPPPSQ. Over residues 51–66 the composition is skewed to low complexity; sequence SPHSYSPPQYPPHGQY. The span at 82-93 shows a compositional bias: polar residues; that stretch reads QYRSYHSHSPSW. Residues His210 and Cys266 contribute to the active site.

This sequence belongs to the peptidase C14B family.

In terms of biological role, involved in cell death (apoptosis). The chain is Metacaspase-1B (casB) from Aspergillus oryzae (strain ATCC 42149 / RIB 40) (Yellow koji mold).